The following is a 285-amino-acid chain: tRNA (cytidine(32)/guanosine(34)-2'-O)-methyltransferase (285 aa).

Residues Gly-53, Trp-55, Asp-83, Asp-99, and Asp-124 each contribute to the S-adenosyl-L-methionine site. Lys-164 acts as the Proton acceptor in catalysis.

Belongs to the class I-like SAM-binding methyltransferase superfamily. RNA methyltransferase RlmE family. TRM7 subfamily.

Its subcellular location is the cytoplasm. The enzyme catalyses cytidine(32)/guanosine(34) in tRNA + 2 S-adenosyl-L-methionine = 2'-O-methylcytidine(32)/2'-O-methylguanosine(34) in tRNA + 2 S-adenosyl-L-homocysteine + 2 H(+). Its function is as follows. Methylates the 2'-O-ribose of nucleotides at positions 32 and 34 of the tRNA anticodon loop of substrate tRNAs. Requires trm732 for methylation of the cytidine at position 32 of the anticodon loop of substrate tRNAs. Requires trm734 for methylation of the nucleotide at position 34 of the anticodon loop of substrate tRNAs. Methylates tRNA(Phe). This Schizosaccharomyces pombe (strain 972 / ATCC 24843) (Fission yeast) protein is tRNA (cytidine(32)/guanosine(34)-2'-O)-methyltransferase.